The chain runs to 239 residues: 7-cyano-7-deazaguanine synthase (239 aa).

16 to 26 (FSGGQDSTTCL) serves as a coordination point for ATP. Zn(2+) contacts are provided by cysteine 204, cysteine 219, cysteine 222, and cysteine 225.

It belongs to the QueC family. Zn(2+) serves as cofactor.

The catalysed reaction is 7-carboxy-7-deazaguanine + NH4(+) + ATP = 7-cyano-7-deazaguanine + ADP + phosphate + H2O + H(+). It participates in purine metabolism; 7-cyano-7-deazaguanine biosynthesis. Its function is as follows. Catalyzes the ATP-dependent conversion of 7-carboxy-7-deazaguanine (CDG) to 7-cyano-7-deazaguanine (preQ(0)). In Polaromonas naphthalenivorans (strain CJ2), this protein is 7-cyano-7-deazaguanine synthase.